We begin with the raw amino-acid sequence, 487 residues long: Solute carrier family 22 member 15-like (487 aa).

A helical transmembrane segment spans residues 22-42 (AFLTLLQVYVACQSMLIVLVG). Asn70 carries an N-linked (GlcNAc...) asparagine glycan. The next 11 helical transmembrane spans lie at 90-110 (LASS…GPLS), 117-137 (PVYL…ALAP), 141-161 (VFAV…LVSF), 178-198 (SLTN…GFYI), 203-223 (TLAF…FLLP), 286-306 (ILLM…TLNA), 315-335 (LNVA…LYFI), 345-365 (ATAG…FLPE), 374-394 (TVLA…VYIY), 406-426 (AGLG…PFIP), and 435-455 (MPFV…LLLP).

The protein belongs to the major facilitator (TC 2.A.1) superfamily. Organic cation transporter (TC 2.A.1.19) family.

Its subcellular location is the membrane. Functionally, probably transports organic cations. This chain is Solute carrier family 22 member 15-like (slc22a15b), found in Xenopus tropicalis (Western clawed frog).